Reading from the N-terminus, the 538-residue chain is MFRQNLITSAILLMAPLAFSAQSLAESLTVEQRLELLEKALRETQSELKKYKDEEKKKYTPATVNRSVSTNDQGYAANPFPTSSAAKPDAVLVKNEEKNASETGSIYSSMTLKDFSKFVKDEIGFSYNGYYRSGWGTASHGSPKSWAIGSLGRFGNEYSGWFDLQLKQRVYNENGKRVDAVVMIDGNVGQQYSTGWFGDNAGGENFMQFSDMYVTTKGFLPFAPEADFWVGKHGAPKIEIQMLDWKTQRTDAAAGVGLENWKVGPGKIDIALVREDVDDYDRSLQNKQQINTHTIDLRYKDIPLWDKATLMVSGRYVTANESASEKDNQDNNGYYDWKDTWMFGTSLTQKFDKGGFNEFSFLVANNSIARNFGRYAGASPFTTFNGRYYGDHTGGTAVRLTSQGEAYIGDHFIVANAIVYSFGNNIYSYETGAHSDFESIRAVVRPAYIWDQYNQTGVELGYFTQQNKDANSNKFNESGYKTTLFHTFKVNTSMLTSRLEIRFYATYIKALENELDGFTFEDNKDAQFAVGAQAEIWW.

The signal sequence occupies residues 1 to 25 (MFRQNLITSAILLMAPLAFSAQSLA). A disordered region spans residues 52 to 82 (KDEEKKKYTPATVNRSVSTNDQGYAANPFPT). Positions 62–73 (ATVNRSVSTNDQ) are enriched in polar residues.

This sequence belongs to the porin LamB (TC 1.B.3) family.

The protein resides in the cell outer membrane. Functionally, may be a sugar porin with a broad carbohydrate specificity. This chain is Putative outer membrane porin BglH (bglH), found in Shigella flexneri.